An 89-amino-acid polypeptide reads, in one-letter code: Small ribosomal subunit protein uS15 (89 aa).

The protein belongs to the universal ribosomal protein uS15 family. In terms of assembly, part of the 30S ribosomal subunit. Forms a bridge to the 50S subunit in the 70S ribosome, contacting the 23S rRNA.

Functionally, one of the primary rRNA binding proteins, it binds directly to 16S rRNA where it helps nucleate assembly of the platform of the 30S subunit by binding and bridging several RNA helices of the 16S rRNA. Its function is as follows. Forms an intersubunit bridge (bridge B4) with the 23S rRNA of the 50S subunit in the ribosome. This is Small ribosomal subunit protein uS15 from Lactobacillus delbrueckii subsp. bulgaricus (strain ATCC 11842 / DSM 20081 / BCRC 10696 / JCM 1002 / NBRC 13953 / NCIMB 11778 / NCTC 12712 / WDCM 00102 / Lb 14).